A 277-amino-acid polypeptide reads, in one-letter code: 3-methyl-2-oxobutanoate hydroxymethyltransferase (277 aa).

Residues Asp-42 and Asp-81 each contribute to the Mg(2+) site. 3-methyl-2-oxobutanoate is bound by residues 42 to 43 (DS), Asp-81, and Lys-110. A Mg(2+)-binding site is contributed by Glu-112. Residue Glu-179 is the Proton acceptor of the active site.

It belongs to the PanB family. Homodecamer; pentamer of dimers. Requires Mg(2+) as cofactor.

The protein localises to the cytoplasm. It carries out the reaction 3-methyl-2-oxobutanoate + (6R)-5,10-methylene-5,6,7,8-tetrahydrofolate + H2O = 2-dehydropantoate + (6S)-5,6,7,8-tetrahydrofolate. It participates in cofactor biosynthesis; (R)-pantothenate biosynthesis; (R)-pantoate from 3-methyl-2-oxobutanoate: step 1/2. Catalyzes the reversible reaction in which hydroxymethyl group from 5,10-methylenetetrahydrofolate is transferred onto alpha-ketoisovalerate to form ketopantoate. This chain is 3-methyl-2-oxobutanoate hydroxymethyltransferase, found in Anaplasma marginale (strain Florida).